The primary structure comprises 170 residues: Bifunctional protein PyrR (170 aa).

Residues 90-102 (LVLVDDVLMSGRT) carry the PRPP-binding motif.

The protein belongs to the purine/pyrimidine phosphoribosyltransferase family. PyrR subfamily.

It carries out the reaction UMP + diphosphate = 5-phospho-alpha-D-ribose 1-diphosphate + uracil. Functionally, regulates the transcription of the pyrimidine nucleotide (pyr) operon in response to exogenous pyrimidines. Also displays a weak uracil phosphoribosyltransferase activity which is not physiologically significant. This chain is Bifunctional protein PyrR, found in Pseudomonas paraeruginosa (strain DSM 24068 / PA7) (Pseudomonas aeruginosa (strain PA7)).